The sequence spans 493 residues: 6-aminohexanoate-cyclic-dimer hydrolase (493 aa).

Active-site charge relay system residues include lysine 72 and serine 150. Serine 174 acts as the Acyl-ester intermediate in catalysis.

Belongs to the amidase family. As to quaternary structure, homodimer.

It carries out the reaction 1,8-diazacyclotetradecane-2,9-dione + H2O = N-(6-aminohexanoyl)-6-aminohexanoate. The protein operates within xenobiotic degradation; nylon-6 oligomer degradation. Catalyzes the hydrolysis of 6-aminohexanoic acid cyclic dimer (1,8-diazacyclotetradecane-2,9-dione) to form the linear dimer 6-aminohexanoyl-6-aminohexanoic acid. The chain is 6-aminohexanoate-cyclic-dimer hydrolase (nylA) from Pseudomonas sp. (strain NK87).